The primary structure comprises 47 residues: Large ribosomal subunit protein bL36A (47 aa).

Belongs to the bacterial ribosomal protein bL36 family.

This chain is Large ribosomal subunit protein bL36A, found in Yersinia enterocolitica serotype O:8 / biotype 1B (strain NCTC 13174 / 8081).